The primary structure comprises 481 residues: O-phosphoseryl-tRNA(Sec) selenium transferase (481 aa).

The interval 1–36 is tetramerization; that stretch reads MKANFGKKEGEYSRLVSKSSNKLLNSLWEKKQIPEE. Position 69 (Arg69) interacts with pyridoxal 5'-phosphate. The interval 90–100 is phosphate loop (P-loop); it reads GRSGNLLEIQP. Substrate contacts are provided by Arg91, Ser92, and Gln99. At Lys277 the chain carries N6-(pyridoxal phosphate)lysine. Arg306 is a substrate binding site.

This sequence belongs to the SepSecS family. In terms of assembly, homotetramer formed by a catalytic dimer and a non-catalytic dimer serving as a binding platform that orients tRNASec for catalysis. Each tetramer binds the CCA ends of two tRNAs which point to the active sites of the catalytic dimer. Requires pyridoxal 5'-phosphate as cofactor.

It is found in the cytoplasm. The catalysed reaction is O-phospho-L-seryl-tRNA(Sec) + selenophosphate + H2O = L-selenocysteinyl-tRNA(Sec) + 2 phosphate. It functions in the pathway aminoacyl-tRNA biosynthesis; selenocysteinyl-tRNA(Sec) biosynthesis; selenocysteinyl-tRNA(Sec) from L-seryl-tRNA(Sec) (archaeal/eukaryal route): step 2/2. Converts O-phosphoseryl-tRNA(Sec) to selenocysteinyl-tRNA(Sec) required for selenoprotein biosynthesis. This Caenorhabditis elegans protein is O-phosphoseryl-tRNA(Sec) selenium transferase (secs-1).